Consider the following 439-residue polypeptide: Proline--tRNA ligase (439 aa).

This sequence belongs to the class-II aminoacyl-tRNA synthetase family. ProS type 2 subfamily. In terms of assembly, homodimer.

It is found in the cytoplasm. The catalysed reaction is tRNA(Pro) + L-proline + ATP = L-prolyl-tRNA(Pro) + AMP + diphosphate. Functionally, catalyzes the attachment of proline to tRNA(Pro) in a two-step reaction: proline is first activated by ATP to form Pro-AMP and then transferred to the acceptor end of tRNA(Pro). The polypeptide is Proline--tRNA ligase (Bradyrhizobium diazoefficiens (strain JCM 10833 / BCRC 13528 / IAM 13628 / NBRC 14792 / USDA 110)).